The primary structure comprises 270 residues: Glucosamine-6-phosphate deaminase (270 aa).

Residue aspartate 68 is the Proton acceptor; for enolization step of the active site. Aspartate 145 functions as the For ring-opening step in the catalytic mechanism. Histidine 147 functions as the Proton acceptor; for ring-opening step in the catalytic mechanism. The active-site For ring-opening step is the glutamate 152.

Belongs to the glucosamine/galactosamine-6-phosphate isomerase family. NagB subfamily.

It catalyses the reaction alpha-D-glucosamine 6-phosphate + H2O = beta-D-fructose 6-phosphate + NH4(+). It participates in amino-sugar metabolism; N-acetylneuraminate degradation; D-fructose 6-phosphate from N-acetylneuraminate: step 5/5. Functionally, catalyzes the reversible isomerization-deamination of glucosamine 6-phosphate (GlcN6P) to form fructose 6-phosphate (Fru6P) and ammonium ion. In Bifidobacterium longum subsp. infantis (strain ATCC 15697 / DSM 20088 / JCM 1222 / NCTC 11817 / S12), this protein is Glucosamine-6-phosphate deaminase.